A 320-amino-acid chain; its full sequence is Ferrochelatase (320 aa).

Fe cation contacts are provided by His-194 and Glu-275.

This sequence belongs to the ferrochelatase family. As to quaternary structure, monomer.

It localises to the cytoplasm. It catalyses the reaction heme b + 2 H(+) = protoporphyrin IX + Fe(2+). Its pathway is porphyrin-containing compound metabolism; protoheme biosynthesis; protoheme from protoporphyrin-IX: step 1/1. Its function is as follows. Catalyzes the ferrous insertion into protoporphyrin IX. This Salmonella typhi protein is Ferrochelatase.